Consider the following 316-residue polypeptide: Taste receptor type 2 member 3 (316 aa).

Residues 1–7 (MFGFIEG) lie on the Extracellular side of the membrane. A helical membrane pass occupies residues 8 to 28 (VFLVLTITEFILGNLVNGFIV). At 29–50 (SINSSYWFKSKKISLSNFIITS) the chain is on the cytoplasmic side. Residues 51 to 71 (LALFRIFLLWIIFIDSLIIVF) form a helical membrane-spanning segment. The Extracellular portion of the chain corresponds to 72–86 (SYQTHDSGIMMQLID). Residues 87–107 (VFWTFTNHFSIWLISCLSVFY) traverse the membrane as a helical segment. The Cytoplasmic segment spans residues 108-128 (CLKIASFSHPSFLWLKWRASR). A helical transmembrane segment spans residues 129–149 (VVVGMLWGALLLSCVSTMSLM). The Extracellular segment spans residues 150 to 186 (NEFKIYSALTRSKDTPNMTEYIRLKRQEYNLMHVLGN). Asparagine 166 is a glycosylation site (N-linked (GlcNAc...) asparagine). The helical transmembrane segment at 187-207 (LWKIPSLIVSLVAYLLLLLSL) threads the bilayer. The Cytoplasmic portion of the chain corresponds to 208–234 (GKHTQQMQQYSIDSRDQSAEAHKRAMR). Residues 235 to 255 (IISSFLLFFLFYFLSFMILSS) form a helical membrane-spanning segment. Over 256-266 (SRFLPETRIAR) the chain is Extracellular. Residues 267 to 287 (IIGVVISMSYLVGDSFILIVC) form a helical membrane-spanning segment. At 288-316 (NNKLKHTFVAMLPCECGHLKPGSKGPSAS) the chain is on the cytoplasmic side.

The protein belongs to the G-protein coupled receptor T2R family.

The protein resides in the membrane. Functionally, gustducin-coupled receptor implicated in the perception of bitter compounds in the oral cavity and the gastrointestinal tract. Signals through PLCB2 and the calcium-regulated cation channel TRPM5. The protein is Taste receptor type 2 member 3 (Tas2r3) of Mus musculus (Mouse).